We begin with the raw amino-acid sequence, 371 residues long: Chaperone protein DnaJ (371 aa).

A J domain is found at D4–G68. A CR-type zinc finger spans residues G134–Q212. Zn(2+) is bound by residues C147, C150, C164, C167, C186, C189, C200, and C203. CXXCXGXG motif repeat units follow at residues C147–G154, C164–G171, C186–G193, and C200–G207.

Belongs to the DnaJ family. Homodimer. Requires Zn(2+) as cofactor.

It is found in the cytoplasm. In terms of biological role, participates actively in the response to hyperosmotic and heat shock by preventing the aggregation of stress-denatured proteins and by disaggregating proteins, also in an autonomous, DnaK-independent fashion. Unfolded proteins bind initially to DnaJ; upon interaction with the DnaJ-bound protein, DnaK hydrolyzes its bound ATP, resulting in the formation of a stable complex. GrpE releases ADP from DnaK; ATP binding to DnaK triggers the release of the substrate protein, thus completing the reaction cycle. Several rounds of ATP-dependent interactions between DnaJ, DnaK and GrpE are required for fully efficient folding. Also involved, together with DnaK and GrpE, in the DNA replication of plasmids through activation of initiation proteins. The protein is Chaperone protein DnaJ of Rickettsia akari (strain Hartford).